The following is a 114-amino-acid chain: Large ribosomal subunit protein uL22 (114 aa).

Belongs to the universal ribosomal protein uL22 family. As to quaternary structure, part of the 50S ribosomal subunit.

Functionally, this protein binds specifically to 23S rRNA; its binding is stimulated by other ribosomal proteins, e.g. L4, L17, and L20. It is important during the early stages of 50S assembly. It makes multiple contacts with different domains of the 23S rRNA in the assembled 50S subunit and ribosome. The globular domain of the protein is located near the polypeptide exit tunnel on the outside of the subunit, while an extended beta-hairpin is found that lines the wall of the exit tunnel in the center of the 70S ribosome. This is Large ribosomal subunit protein uL22 from Desulfitobacterium hafniense (strain Y51).